The primary structure comprises 89 residues: Small ribosomal subunit protein uS15 (89 aa).

Residues 1–11 (MSIAAERKAEV) show a composition bias toward basic and acidic residues. A disordered region spans residues 1–24 (MSIAAERKAEVIKTNATKAGDTGS).

The protein belongs to the universal ribosomal protein uS15 family. As to quaternary structure, part of the 30S ribosomal subunit. Forms a bridge to the 50S subunit in the 70S ribosome, contacting the 23S rRNA.

One of the primary rRNA binding proteins, it binds directly to 16S rRNA where it helps nucleate assembly of the platform of the 30S subunit by binding and bridging several RNA helices of the 16S rRNA. Its function is as follows. Forms an intersubunit bridge (bridge B4) with the 23S rRNA of the 50S subunit in the ribosome. The sequence is that of Small ribosomal subunit protein uS15 from Bradyrhizobium diazoefficiens (strain JCM 10833 / BCRC 13528 / IAM 13628 / NBRC 14792 / USDA 110).